We begin with the raw amino-acid sequence, 472 residues long: Adenosylhomocysteinase (472 aa).

Thr-61, Asp-136, and Glu-196 together coordinate substrate. Position 197–199 (197–199 (TTT)) interacts with NAD(+). 2 residues coordinate substrate: Lys-226 and Asp-230. NAD(+)-binding positions include Asn-231, 260–265 (GYGDVG), Glu-283, Asn-318, 339–341 (IGH), and Asn-384.

Belongs to the adenosylhomocysteinase family. NAD(+) is required as a cofactor.

The protein localises to the cytoplasm. It carries out the reaction S-adenosyl-L-homocysteine + H2O = L-homocysteine + adenosine. Its pathway is amino-acid biosynthesis; L-homocysteine biosynthesis; L-homocysteine from S-adenosyl-L-homocysteine: step 1/1. Functionally, may play a key role in the regulation of the intracellular concentration of adenosylhomocysteine. The protein is Adenosylhomocysteinase of Cupriavidus metallidurans (strain ATCC 43123 / DSM 2839 / NBRC 102507 / CH34) (Ralstonia metallidurans).